A 380-amino-acid chain; its full sequence is Glutamine synthetase, chloroplastic (380 aa).

Residues 35-125 (MAAEYIWADG…VMCEVFAPDG (91 aa)) form the GS beta-grasp domain. The region spanning 132-380 (TRAKLREIID…RLLIKTVLKG (249 aa)) is the GS catalytic domain.

It belongs to the glutamine synthetase family. As to quaternary structure, homooctamer.

Its subcellular location is the plastid. The protein resides in the chloroplast. It catalyses the reaction L-glutamate + NH4(+) + ATP = L-glutamine + ADP + phosphate + H(+). This chain is Glutamine synthetase, chloroplastic (GLN2), found in Chlamydomonas reinhardtii (Chlamydomonas smithii).